A 395-amino-acid chain; its full sequence is Fe(3+) ions import ATP-binding protein FbpC 2 (395 aa).

The tract at residues 1-21 (MHIAQELADETCNSPRGAGHA) is disordered. Positions 23–264 (LRYPSDRRTA…PKTLFVADFI (242 aa)) constitute an ABC transporter domain. 66–73 (GPSGCGKT) is a binding site for ATP.

The protein belongs to the ABC transporter superfamily. Fe(3+) ion importer (TC 3.A.1.10) family. In terms of assembly, the complex is composed of two ATP-binding proteins (FbpC), two transmembrane proteins (FbpB) and a solute-binding protein (FbpA).

The protein localises to the cell inner membrane. It carries out the reaction Fe(3+)(out) + ATP + H2O = Fe(3+)(in) + ADP + phosphate + H(+). Part of the ABC transporter complex FbpABC involved in Fe(3+) ions import. Responsible for energy coupling to the transport system. The protein is Fe(3+) ions import ATP-binding protein FbpC 2 of Rhizobium meliloti (strain 1021) (Ensifer meliloti).